The chain runs to 332 residues: 2-hydroxyacid dehydrogenase homolog 1 (332 aa).

NAD(+) is bound by residues 154 to 155 (RI), 233 to 235 (TSR), and aspartate 259. Arginine 235 is an active-site residue. Glutamate 264 is a catalytic residue. Histidine 296 serves as the catalytic Proton donor. An NAD(+)-binding site is contributed by 296-299 (HQAF).

Belongs to the D-isomer specific 2-hydroxyacid dehydrogenase family.

It is found in the cytoplasm. The protein resides in the nucleus. This is 2-hydroxyacid dehydrogenase homolog 1 from Schizosaccharomyces pombe (strain 972 / ATCC 24843) (Fission yeast).